Consider the following 308-residue polypeptide: Cytochrome b (308 aa).

The next 4 helical transmembrane spans lie at phenylalanine 1–methionine 21, tryptophan 45–isoleucine 66, tryptophan 81–leucine 101, and phenylalanine 146–threonine 166. The heme b site is built by histidine 51 and histidine 65. Heme b contacts are provided by histidine 150 and histidine 164. Histidine 169 lines the a ubiquinone pocket. 3 consecutive transmembrane segments (helical) span residues isoleucine 194–serine 214, leucine 256–histidine 276, and leucine 288–serine 308.

The protein belongs to the cytochrome b family. In terms of assembly, the cytochrome bc1 complex contains 11 subunits: 3 respiratory subunits (MT-CYB, CYC1 and UQCRFS1), 2 core proteins (UQCRC1 and UQCRC2) and 6 low-molecular weight proteins (UQCRH/QCR6, UQCRB/QCR7, UQCRQ/QCR8, UQCR10/QCR9, UQCR11/QCR10 and a cleavage product of UQCRFS1). This cytochrome bc1 complex then forms a dimer. Heme b is required as a cofactor.

The protein localises to the mitochondrion inner membrane. Functionally, component of the ubiquinol-cytochrome c reductase complex (complex III or cytochrome b-c1 complex) that is part of the mitochondrial respiratory chain. The b-c1 complex mediates electron transfer from ubiquinol to cytochrome c. Contributes to the generation of a proton gradient across the mitochondrial membrane that is then used for ATP synthesis. In Corvus corax (Common raven), this protein is Cytochrome b (MT-CYB).